The following is a 193-amino-acid chain: Peptidyl-tRNA hydrolase (193 aa).

Residue Tyr17 participates in tRNA binding. His22 functions as the Proton acceptor in the catalytic mechanism. 3 residues coordinate tRNA: Tyr69, Asn71, and Asn117.

It belongs to the PTH family. As to quaternary structure, monomer.

The protein localises to the cytoplasm. It carries out the reaction an N-acyl-L-alpha-aminoacyl-tRNA + H2O = an N-acyl-L-amino acid + a tRNA + H(+). In terms of biological role, hydrolyzes ribosome-free peptidyl-tRNAs (with 1 or more amino acids incorporated), which drop off the ribosome during protein synthesis, or as a result of ribosome stalling. Functionally, catalyzes the release of premature peptidyl moieties from peptidyl-tRNA molecules trapped in stalled 50S ribosomal subunits, and thus maintains levels of free tRNAs and 50S ribosomes. The protein is Peptidyl-tRNA hydrolase of Leifsonia xyli subsp. xyli (strain CTCB07).